We begin with the raw amino-acid sequence, 95 residues long: Aspartyl/glutamyl-tRNA(Asn/Gln) amidotransferase subunit C (95 aa).

It belongs to the GatC family. In terms of assembly, heterotrimer of A, B and C subunits.

It carries out the reaction L-glutamyl-tRNA(Gln) + L-glutamine + ATP + H2O = L-glutaminyl-tRNA(Gln) + L-glutamate + ADP + phosphate + H(+). The catalysed reaction is L-aspartyl-tRNA(Asn) + L-glutamine + ATP + H2O = L-asparaginyl-tRNA(Asn) + L-glutamate + ADP + phosphate + 2 H(+). Its function is as follows. Allows the formation of correctly charged Asn-tRNA(Asn) or Gln-tRNA(Gln) through the transamidation of misacylated Asp-tRNA(Asn) or Glu-tRNA(Gln) in organisms which lack either or both of asparaginyl-tRNA or glutaminyl-tRNA synthetases. The reaction takes place in the presence of glutamine and ATP through an activated phospho-Asp-tRNA(Asn) or phospho-Glu-tRNA(Gln). The protein is Aspartyl/glutamyl-tRNA(Asn/Gln) amidotransferase subunit C of Azorhizobium caulinodans (strain ATCC 43989 / DSM 5975 / JCM 20966 / LMG 6465 / NBRC 14845 / NCIMB 13405 / ORS 571).